Here is a 997-residue protein sequence, read N- to C-terminus: Autophagy-related protein 9 (997 aa).

The Cytoplasmic segment spans residues 1-318 (MERDEYQLPN…DVYNYYLGNG (318 aa)). A Phosphoserine; by ATG1 modification is found at S19. The segment covering 29–39 (VNPSLNSQEMS) has biased composition (polar residues). Residues 29–88 (VNPSLNSQEMSNFPLPDIERGSSLLHSTNDSREDVDENDLRVPESDQGTSTEEEDEVDEE) form a disordered region. Acidic residues predominate over residues 79–88 (TEEEDEVDEE). Residues K113 and K121 each participate in a glycyl lysine isopeptide (Lys-Gly) (interchain with G-Cter in ubiquitin) cross-link. S122 is subject to Phosphoserine. 2 disordered regions span residues 128–159 (VEGSTDDSVPKVGQLSSEEEEDNEFINNDGFD) and 213–235 (IHHDKDKSANNGPRNINGNQKHG). Residue K138 forms a Glycyl lysine isopeptide (Lys-Gly) (interchain with G-Cter in ubiquitin) linkage. 2 positions are modified to phosphoserine: S143 and S144. A compositionally biased stretch (acidic residues) spans 144–159 (SEEEEDNEFINNDGFD). A compositionally biased stretch (polar residues) spans 221-233 (ANNGPRNINGNQK). The chain crosses the membrane as a helical span at residues 319–339 (FYCIILEKILNICTLLFVVFV). The Lumenal segment spans residues 340 to 376 (STYMGHCVDYSKLPTSHRVSDIIIDKCYSNSITGFTK). The helical transmembrane segment at 377-397 (FFLWMFYFFVILKIVQLYFDV) threads the bilayer. At 398–538 (QKLSELQNFY…EELQKRFMLA (141 aa)) the chain is on the cytoplasmic side. The stretch at 539–559 (GFLNIILAPFLVTYFVLLYFF) is an intramembrane region. The Cytoplasmic segment spans residues 560-620 (RYFNEYKTSP…DQFPKEKTNL (61 aa)). A helical membrane pass occupies residues 621-641 (FLKFVSFICGSFVAILAFLTV). Over 642 to 656 (FDPENFLNFEITSDR) the chain is Lumenal. S657 is modified (phosphoserine; by ATG1). A helical transmembrane segment spans residues 657–677 (SVIFYITILGAIWSVSRNTIT). Residues 678–723 (QEYHVFDPEETLKELYEYTHYLPKEWEGRYHKEEIKLEFCKLYNLR) lie on the Cytoplasmic side of the membrane. K701 is covalently cross-linked (Glycyl lysine isopeptide (Lys-Gly) (interchain with G-Cter in ubiquitin)). Residues 724 to 744 (IVILLRELTSLMITPFVLWFS) lie within the membrane without spanning it. The Cytoplasmic portion of the chain corresponds to 745 to 997 (LPSSAGRIVD…EYYKKSDVGR (253 aa)). A phosphoserine mark is found at S787 and S792. Residue T794 is modified to Phosphothreonine. A Phosphoserine; by ATG1 modification is found at S802. T804 is modified (phosphothreonine; by ATG1). Residues S831 and S842 each carry the phosphoserine; by ATG1 modification. A Phosphoserine modification is found at S864. Residues S948 and S969 each carry the phosphoserine; by ATG1 modification.

The protein belongs to the ATG9 family. Homotrimer; forms a homotrimer with a central pore that forms a path between the two membrane leaflets. Interacts with ATG23 and ATG27 to form a cycling complex for trafficking to the PAS. Interacts (via N-terminus) with ATG11, required for recruitment of ATG9 to the PAS for the Cvt pathway during nutrient-rich conditions. Interacts (via N-terminus) with ATG17; required for recruitment to the PAS during autophagy and starved conditions. Interacts with ATG2 and ATG18; required for the retrieval of ATG9 from the PAS to the cytoplasmic pool. Interacts with ATG41. Interacts with the conserved oligomeric Golgi (COG) complex subunits COG3 and COG4. Interacts with TRS85. Phosphorylated by ATG1; phosphorylation is required for autophagy and cytoplasm to vacuole transport (Cvt) vesicle formation. Phosphorylation by ATG1 regulates ATG18 interaction and preautophagosome elongation. Phosphorylation at Ser-122 is required for selective autophagy by regulating anterograde trafficking and interaction with ATG23 and ATG27. Phosphorylation at Ser-122 prevents ubiquitination by the SCF(MET30) complex. Post-translationally, ubiquitinated by the SCF(MET30) complex in normal conditions, leading to its degradation by the proteasome, thereby preventing inappropriate induction of autophagy. Ubiquitination by the SCF(MET30) complex is prevented by phosphorylation at Ser-122.

The protein resides in the preautophagosomal structure membrane. It localises to the cytoplasmic vesicle membrane. Its subcellular location is the golgi apparatus membrane. It is found in the endoplasmic reticulum membrane. The protein localises to the mitochondrion membrane. It carries out the reaction a 1,2-diacyl-sn-glycero-3-phosphocholine(in) = a 1,2-diacyl-sn-glycero-3-phosphocholine(out). The catalysed reaction is a 1,2-diacyl-sn-glycero-3-phospho-L-serine(in) = a 1,2-diacyl-sn-glycero-3-phospho-L-serine(out). It catalyses the reaction a 1,2-diacyl-sn-glycero-3-phosphoethanolamine(in) = a 1,2-diacyl-sn-glycero-3-phosphoethanolamine(out). The enzyme catalyses a 1,2-diacyl-sn-glycero-3-phospho-(1D-myo-inositol-3-phosphate)(in) = a 1,2-diacyl-sn-glycero-3-phospho-(1D-myo-inositol-3-phosphate)(out). Functionally, phospholipid scramblase involved in autophagy and cytoplasm to vacuole transport (Cvt) vesicle formation. Cycles between the preautophagosomal structure/phagophore assembly site (PAS) and the cytoplasmic vesicle pool and supplies membrane for the growing autophagosome. Lipid scramblase activity plays a key role in preautophagosomal structure/phagophore assembly by distributing the phospholipids that arrive through ATG2 from the cytoplasmic to the luminal leaflet of the bilayer, thereby driving autophagosomal membrane expansion. Required for mitophagy. Also involved in endoplasmic reticulum-specific autophagic process and is essential for the survival of cells subjected to severe ER stress. Recruits vesicle-tethering proteins TRS85 and YPT1 to the autophagosome formation site. Also recruits ATG23 and ATG8 to the PAS. In Saccharomyces cerevisiae (strain ATCC 204508 / S288c) (Baker's yeast), this protein is Autophagy-related protein 9.